The primary structure comprises 523 residues: GMP synthase [glutamine-hydrolyzing] (523 aa).

Residues 8-205 (KILILDFGSQ…VVDICGCETN (198 aa)) form the Glutamine amidotransferase type-1 domain. Catalysis depends on Cys-85, which acts as the Nucleophile. Catalysis depends on residues His-179 and Glu-181. In terms of domain architecture, GMPS ATP-PPase spans 206-398 (WTAENIIEDA…LGLPAEMLNR (193 aa)). 233–239 (SGGVDSS) contacts ATP.

Homodimer.

The catalysed reaction is XMP + L-glutamine + ATP + H2O = GMP + L-glutamate + AMP + diphosphate + 2 H(+). Its pathway is purine metabolism; GMP biosynthesis; GMP from XMP (L-Gln route): step 1/1. Catalyzes the synthesis of GMP from XMP. This chain is GMP synthase [glutamine-hydrolyzing], found in Histophilus somni (strain 129Pt) (Haemophilus somnus).